Reading from the N-terminus, the 79-residue chain is Small ribosomal subunit protein bS16 (79 aa).

It belongs to the bacterial ribosomal protein bS16 family.

The chain is Small ribosomal subunit protein bS16 from Desulfovibrio desulfuricans (strain ATCC 27774 / DSM 6949 / MB).